The following is a 178-amino-acid chain: Inner membrane-spanning protein YciB (178 aa).

Helical transmembrane passes span 12–32 (LFFAAYSLTGNIYLATGVAIV), 50–70 (PMQWVSLALILVLGGLTLVLH), 74–94 (FIMWKPTVLYWLLGAGFLISD), 120–140 (LTFAWSGFFAFMGALNLFVAF), and 145–165 (AVWVNFKLFGGMGLMLVFVLA).

Belongs to the YciB family.

The protein localises to the cell inner membrane. Its function is as follows. Plays a role in cell envelope biogenesis, maintenance of cell envelope integrity and membrane homeostasis. The polypeptide is Inner membrane-spanning protein YciB (Laribacter hongkongensis (strain HLHK9)).